A 776-amino-acid polypeptide reads, in one-letter code: GATOR2 complex protein Wdr24 (776 aa).

WD repeat units lie at residues 63 to 103 (NLSY…RQKQ), 109 to 149 (EHER…SINT), 152 to 192 (CNSE…KCMV), 196 to 235 (AHYGPVYTCDWHPTRNWLATGSRDKQIKVWNMDGRPGLEH), 238 to 280 (HTIA…IPFA), and 284 to 326 (EHTN…ALKA). The disordered stretch occupies residues 466 to 490 (HRSSFSNQKNPMNSRRATQVASDWP). Residues 469-490 (SFSNQKNPMNSRRATQVASDWP) are compositionally biased toward polar residues. The segment at 703–726 (NCGECGRPMGGKVGWYCDKCKSMQ) adopts a C4-type zinc-finger fold. Zn(2+)-binding residues include C704, C707, C719, C722, C730, C733, C744, C747, H749, H752, H755, C766, C769, H771, and C773. Residues 728–776 (AKCCVCGLIVRGVYAWCQGCSHGGHIEHLQKYFAKHSKCPKCGHLCAYS) form an RING-type; atypical zinc finger.

Belongs to the WD repeat WDR24 family. Component of the GATOR complex consisting of mio, Nup44A/Seh1, Im11, Nplr3, Nplr2, Wdr24, Wdr59 and Sec13. Within the GATOR complex, probable component of the GATOR2 subcomplex which is likely composed of mio, Nup44A/Seh1, Wdr24, Wdr59 and Sec13. Interacts with Nup44A/Seh1. Interacts with mio. Interacts with Nplr3. The GATOR2 complex associates with unmet in the absence of S-adenosyl-L-methionine; the mio-Wdr24-Nup44A subcomplex is essential and sufficient for this interaction while Wdr59 and Sec13 are dispensable. This association acts as a nutrient sensor to inhibit mTORC1 signaling in the absence of methionine.

The protein resides in the lysosome. Its subcellular location is the cytoplasmic vesicle. The protein localises to the autophagosome. It catalyses the reaction S-ubiquitinyl-[E2 ubiquitin-conjugating enzyme]-L-cysteine + [acceptor protein]-L-lysine = [E2 ubiquitin-conjugating enzyme]-L-cysteine + N(6)-ubiquitinyl-[acceptor protein]-L-lysine.. The protein operates within protein modification; protein ubiquitination. An essential component of the GATOR subcomplex GATOR2 which functions as an activator of the amino acid-sensing branch of the mTORC1 signaling pathway. The two GATOR subcomplexes, GATOR1 and GATOR2, regulate the mTORC1 pathway in order to mediate metabolic homeostasis, female gametogenesis and the response to amino acid limitation and complete starvation. GATOR2 activates the mTORC1 signaling pathway through the inhibition of the GATOR1 subcomplex, controlling the switch to cell proliferation and growth under nutrient replete conditions and during female oocyte development. GATOR2 probably acts as an E3 ubiquitin-protein ligase toward GATOR1. In the presence of abundant amino acids, the GATOR2 complex mediates ubiquitination of components of the GATOR1 complex, leading to GATOR1 inactivation. This GATOR2 component is required for activating mTORC1 and promoting cell growth in both germline and somatic cells. In addition to its role in regulation of the mTORC1 complex, functions independently of mTORC1 to promote the acidification of lysosomes and facilitates autophagic flux. This is GATOR2 complex protein Wdr24 from Drosophila melanogaster (Fruit fly).